Reading from the N-terminus, the 296-residue chain is Probable 2-(5''-triphosphoribosyl)-3'-dephosphocoenzyme-A synthase (296 aa).

The protein belongs to the CitG/MdcB family.

It carries out the reaction 3'-dephospho-CoA + ATP = 2'-(5''-triphospho-alpha-D-ribosyl)-3'-dephospho-CoA + adenine. This Streptococcus mutans serotype c (strain ATCC 700610 / UA159) protein is Probable 2-(5''-triphosphoribosyl)-3'-dephosphocoenzyme-A synthase.